A 126-amino-acid chain; its full sequence is Aspartate 1-decarboxylase (126 aa).

The Schiff-base intermediate with substrate; via pyruvic acid role is filled by Ser-25. Ser-25 bears the Pyruvic acid (Ser) mark. A substrate-binding site is contributed by Thr-57. Tyr-58 functions as the Proton donor in the catalytic mechanism. Residue 73-75 (GAA) coordinates substrate.

This sequence belongs to the PanD family. As to quaternary structure, heterooctamer of four alpha and four beta subunits. Requires pyruvate as cofactor. Post-translationally, is synthesized initially as an inactive proenzyme, which is activated by self-cleavage at a specific serine bond to produce a beta-subunit with a hydroxyl group at its C-terminus and an alpha-subunit with a pyruvoyl group at its N-terminus.

It is found in the cytoplasm. The enzyme catalyses L-aspartate + H(+) = beta-alanine + CO2. It participates in cofactor biosynthesis; (R)-pantothenate biosynthesis; beta-alanine from L-aspartate: step 1/1. Its function is as follows. Catalyzes the pyruvoyl-dependent decarboxylation of aspartate to produce beta-alanine. The sequence is that of Aspartate 1-decarboxylase from Salmonella arizonae (strain ATCC BAA-731 / CDC346-86 / RSK2980).